A 468-amino-acid polypeptide reads, in one-letter code: Heparan-sulfate 6-O-sulfotransferase 2 (468 aa).

Residues 1–9 lie on the Cytoplasmic side of the membrane; sequence MDGKSNYSR. Residues 10–30 form a helical; Signal-anchor for type II membrane protein membrane-spanning segment; sequence LLIALLMILFFGGIVLQYICS. The Lumenal portion of the chain corresponds to 31-468; sequence TSDWQLLHLA…DYLENVEQWR (438 aa). A glycan (N-linked (GlcNAc...) asparagine) is linked at N79. 103 to 111 provides a ligand contact to 3'-phosphoadenylyl sulfate; it reads HIQKTGGTT. Substrate-binding positions include 133–134, R150, W155, and H160; that span reads KK. H160 (proton acceptor) is an active-site residue. Residues R197 and S205 each contribute to the 3'-phosphoadenylyl sulfate site. The substrate site is built by H209 and W216. Residue N276 is glycosylated (N-linked (GlcNAc...) asparagine). 329 to 331 lines the 3'-phosphoadenylyl sulfate pocket; the sequence is TQL. An N-linked (GlcNAc...) asparagine glycan is attached at N332. 335 to 336 lines the 3'-phosphoadenylyl sulfate pocket; the sequence is RA. Residues 409–447 are disordered; it reads FKPTKEPPMTEQSPAFAEEKQADAERTLESETEGQVEEN. The span at 425-437 shows a compositional bias: basic and acidic residues; sequence AEEKQADAERTLE. Over residues 438-447 the composition is skewed to acidic residues; sequence SETEGQVEEN.

It belongs to the sulfotransferase 6 family. Expressed ubiquitously during gastrulation. During early somitogenesis, strong expression in head and presumptive brain. During mid-somitogenesis, strong expression in eye, hindbrain and somitic boundaries and weak expression in tail bud. During late somitogenesis, strong expression in eye, hindbrain, branchial arch primordia, spinal cord and ventral medial somites. At 24 hours post-fertilization (hpf), strong expression throughout the head, with expression receeding from the trunk spinal cord, ventral medial somites and somitic boundaries; expressed in cells surrounding vascular structures of the dorsal aorta and caudal vein in the tail. At 36 hpf, expressed in lens, optic stalk, hindbrain and pectoral fin. At 48 hpf, expressed in eye, brain, otic vesicle and branchial arches.

The protein resides in the membrane. It catalyses the reaction alpha-D-glucosaminyl-[heparan sulfate](n) + 3'-phosphoadenylyl sulfate = 6-sulfo-alpha-D-glucosaminyl-[heparan sulfate](n) + adenosine 3',5'-bisphosphate + H(+). 6-O-sulfation enzyme which catalyzes the transfer of sulfate from 3'-phosphoadenosine 5'-phosphosulfate (PAPS) to position 6 of the N-sulfoglucosamine residue (GlcNS) of heparan sulfate. Required for muscle development and angiogenesis. The polypeptide is Heparan-sulfate 6-O-sulfotransferase 2 (hs6st2) (Danio rerio (Zebrafish)).